The primary structure comprises 168 residues: MATAPARRASSSRSSSEISRTTPSMGFQLGFVDDSNVFEWQVTIIGPPETLYDGGYFNAIMSFPQNYPNSPPTVRFTSEMWHPNVYPDGRVCISIHPPGDDPNGYELASERWTPVHTVESIVLSIISMLSSPNDESPANIEAAKDWREKQDEFKKKVRRAVRKSQEML.

Residues 1 to 21 form a disordered region; the sequence is MATAPARRASSSRSSSEISRT. The UBC core domain maps to 6–166; it reads ARRASSSRSS…VRRAVRKSQE (161 aa). Cys92 acts as the Glycyl thioester intermediate in catalysis.

It belongs to the ubiquitin-conjugating enzyme family.

It catalyses the reaction S-ubiquitinyl-[E1 ubiquitin-activating enzyme]-L-cysteine + [E2 ubiquitin-conjugating enzyme]-L-cysteine = [E1 ubiquitin-activating enzyme]-L-cysteine + S-ubiquitinyl-[E2 ubiquitin-conjugating enzyme]-L-cysteine.. It participates in protein modification; protein ubiquitination. Catalyzes the covalent attachment of ubiquitin to other proteins so as to signal them for selective protein degradation. Involved in the formation of multiubiquitin chains. This chain is Ubiquitin-conjugating enzyme E2 7 (UBC7), found in Triticum aestivum (Wheat).